A 119-amino-acid polypeptide reads, in one-letter code: Small ribosomal subunit protein bS16 (119 aa).

A compositionally biased stretch (basic residues) spans 96–107; sequence RKKRRAYRQRRS. Residues 96–119 form a disordered region; the sequence is RKKRRAYRQRRSTQREEAAKDATK. Basic and acidic residues predominate over residues 108–119; the sequence is TQREEAAKDATK.

This sequence belongs to the bacterial ribosomal protein bS16 family.

The sequence is that of Small ribosomal subunit protein bS16 from Chlamydia pneumoniae (Chlamydophila pneumoniae).